The sequence spans 90 residues: MTRTVNCRKYNQELPGLERPPFPGQKGEDIYNNISRQAWDDWQKHQTMLINERRLNMMNAEDRKFLQGEMDKFFSGEDYAKAEGYVPPSE.

The protein belongs to the Fe(2+)-trafficking protein family.

Its function is as follows. Could be a mediator in iron transactions between iron acquisition and iron-requiring processes, such as synthesis and/or repair of Fe-S clusters in biosynthetic enzymes. The polypeptide is Probable Fe(2+)-trafficking protein (Stutzerimonas stutzeri (strain A1501) (Pseudomonas stutzeri)).